The following is a 1058-amino-acid chain: MSFISKCFICLLFSTYFLPPVNSAVLQVGFLAANDNTTELAPFIGWGQVAGALGVAWSRIVEYGLLPGYETMNLTWVLTNCREADAVGSVINYAEGHAHVVLGPPCVRPAQVAGSVAKYLDFPLILWGPPFDSSLLNQFEYPTIASTTSSTLYQATSLIRLLEYYKWTEIALIYYVARSDLIPRCTPLISDFEGLVNNNDNLTITYRRQMSVITNTSYATALRNLKELARVVIVCLESDEARRNLMISISENGMDGDEYVYIMAESRRAGFASSFWNGTDGKNDLALRAARKFLVMDNQKYNDTTTFVQEVRAAFSRPPFSCPNCTNIDPTVSQVGPLGDALLLYAYALNRSIATGNPNPTGTEFCEVAKGMEFLGFTGKVIINQNSTRTPLFVVYNLDSTDKEMIVMQITEDLDDSKDPVASSVNYYITLVATPAQIWDTWGGTVPLSTPICGFTGTDCPKSFTDQYLAIILGCTAAALVLIIAVISTIVFLVRSKRQEEERLNQLWQVHFSSLVKPPQKNTMHSSRSLQSTVTTSTKVTINSKKDTERHSFYFLNNDSVVARKHNFRATFTKNDRAMFRKMRNVDNDNLCKFIGLSLDSPTLISIWRYCSRGSLQDVIAKGSLQMDWFFKYSLMRDVADAIYYLHHSPIGPHGWLSSSTCLVDERWQVKVSFFGLSAIKQYEVKEQRDFLHTAPEHIRDTNLPITKEMDIYSFAIICSELITKKSAWDLENETFDIEELVYKIKKGGRSPPRPSLETEDEHNGSMSLLVRDCWNENPDQRPTSEQIKTLMKSMNHNRSSNLMDHVFNVLEQYASNLEDEVQARMKELTEEKKRSDVLLYRMLPKQVAEKLKLGQSVEPETFDCVTIFFSDVVSFTTLASRCTPLQVVNLLNDLYTTFDAIIEQHDVYKVETIGDGYLCVSGLPHRNGNEHAKEISSMSFSLLKAIKTFRVPHLPKERINIRVGLHTGPVVTGVVGMTMPRYCLFGDSVNTASRMESNGKPGRVHISTECMKFLTEVIGGYQTEPRGEVIVKGKGAVQTHWLLTDDEIEAKENGESI.

The first 23 residues, 1–23, serve as a signal peptide directing secretion; it reads MSFISKCFICLLFSTYFLPPVNS. The Extracellular portion of the chain corresponds to 25 to 470; that stretch reads VLQVGFLAAN…PKSFTDQYLA (446 aa). N-linked (GlcNAc...) asparagine glycans are attached at residues Asn-36, Asn-73, Asn-201, Asn-215, Asn-277, Asn-302, Asn-324, Asn-350, and Asn-386. A helical transmembrane segment spans residues 471–491; that stretch reads IILGCTAAALVLIIAVISTIV. Residues 492–1058 lie on the Cytoplasmic side of the membrane; it reads FLVRSKRQEE…IEAKENGESI (567 aa). The Protein kinase domain maps to 501–809; the sequence is EERLNQLWQV…SSNLMDHVFN (309 aa). Positions 811–840 form a coiled coil; that stretch reads LEQYASNLEDEVQARMKELTEEKKRSDVLL. Residues 867-997 form the Guanylate cyclase domain; sequence TIFFSDVVSF…DSVNTASRME (131 aa).

Belongs to the adenylyl cyclase class-4/guanylyl cyclase family. Expression in ASER neuron begins at an early larval stage and is maintained in the adult.

The protein resides in the cell membrane. The enzyme catalyses GTP = 3',5'-cyclic GMP + diphosphate. Guanylate cyclase involved in the production of the second messenger cGMP. Regulates chemotaxis responses toward Li(1-), Mg(2+), Cl(1-), Br(1)- and I(1-) salt ions and methionine in ASE right (ASER) sensory neuron. May regulate ASER neuronal activity such as axon sprouting and calcium responses to changes in salt concentrations. The polypeptide is Receptor-type guanylate cyclase gcy-22 (Caenorhabditis elegans).